The sequence spans 377 residues: UDP-N-acetylglucosamine--N-acetylmuramyl-(pentapeptide) pyrophosphoryl-undecaprenol N-acetylglucosamine transferase (377 aa).

UDP-N-acetyl-alpha-D-glucosamine is bound by residues 29 to 31 (TAG), Asn142, Arg179, Ser213, and Gln308.

This sequence belongs to the glycosyltransferase 28 family. MurG subfamily.

The protein resides in the cell membrane. The catalysed reaction is di-trans,octa-cis-undecaprenyl diphospho-N-acetyl-alpha-D-muramoyl-L-alanyl-D-glutamyl-meso-2,6-diaminopimeloyl-D-alanyl-D-alanine + UDP-N-acetyl-alpha-D-glucosamine = di-trans,octa-cis-undecaprenyl diphospho-[N-acetyl-alpha-D-glucosaminyl-(1-&gt;4)]-N-acetyl-alpha-D-muramoyl-L-alanyl-D-glutamyl-meso-2,6-diaminopimeloyl-D-alanyl-D-alanine + UDP + H(+). It functions in the pathway cell wall biogenesis; peptidoglycan biosynthesis. Cell wall formation. Catalyzes the transfer of a GlcNAc subunit on undecaprenyl-pyrophosphoryl-MurNAc-pentapeptide (lipid intermediate I) to form undecaprenyl-pyrophosphoryl-MurNAc-(pentapeptide)GlcNAc (lipid intermediate II). The chain is UDP-N-acetylglucosamine--N-acetylmuramyl-(pentapeptide) pyrophosphoryl-undecaprenol N-acetylglucosamine transferase from Saccharopolyspora erythraea (strain ATCC 11635 / DSM 40517 / JCM 4748 / NBRC 13426 / NCIMB 8594 / NRRL 2338).